A 161-amino-acid polypeptide reads, in one-letter code: Transcriptional repressor NrdR (161 aa).

The disordered stretch occupies residues 1–23; sequence MRCPFCGHPDTQVKDSRPAEDGN. Residues 3 to 34 fold into a zinc finger; that stretch reads CPFCGHPDTQVKDSRPAEDGNAIRRRRQCPSC. Residues 11–23 show a composition bias toward basic and acidic residues; the sequence is TQVKDSRPAEDGN. The region spanning 49–139 is the ATP-cone domain; the sequence is LTVMKKSGRR…VYKDFHKVED (91 aa).

Belongs to the NrdR family. The cofactor is Zn(2+).

Functionally, negatively regulates transcription of bacterial ribonucleotide reductase nrd genes and operons by binding to NrdR-boxes. The protein is Transcriptional repressor NrdR of Maricaulis maris (strain MCS10) (Caulobacter maris).